The chain runs to 199 residues: Recombination protein RecR (199 aa).

The C4-type zinc-finger motif lies at 57 to 72 (CQSCRTYTEESLCPIC). The 96-residue stretch at 81–176 (STICVVETPA…VISRIAHGVP (96 aa)) folds into the Toprim domain.

Belongs to the RecR family.

Functionally, may play a role in DNA repair. It seems to be involved in an RecBC-independent recombinational process of DNA repair. It may act with RecF and RecO. The sequence is that of Recombination protein RecR from Shewanella sp. (strain ANA-3).